The following is a 92-amino-acid chain: Costars family protein ST45-2 (92 aa).

Residue Met1 is modified to N-acetylmethionine.

The protein belongs to the costars family.

In Eutrema halophilum (Salt cress), this protein is Costars family protein ST45-2.